Reading from the N-terminus, the 172-residue chain is 3-hydroxydecanoyl-[acyl-carrier-protein] dehydratase (172 aa).

Residue histidine 71 is part of the active site.

Belongs to the thioester dehydratase family. FabA subfamily. Homodimer.

Its subcellular location is the cytoplasm. The catalysed reaction is a (3R)-hydroxyacyl-[ACP] = a (2E)-enoyl-[ACP] + H2O. It catalyses the reaction (3R)-hydroxydecanoyl-[ACP] = (2E)-decenoyl-[ACP] + H2O. The enzyme catalyses (2E)-decenoyl-[ACP] = (3Z)-decenoyl-[ACP]. Its pathway is lipid metabolism; fatty acid biosynthesis. Its function is as follows. Necessary for the introduction of cis unsaturation into fatty acids. Catalyzes the dehydration of (3R)-3-hydroxydecanoyl-ACP to E-(2)-decenoyl-ACP and then its isomerization to Z-(3)-decenoyl-ACP. Can catalyze the dehydratase reaction for beta-hydroxyacyl-ACPs with saturated chain lengths up to 16:0, being most active on intermediate chain length. The chain is 3-hydroxydecanoyl-[acyl-carrier-protein] dehydratase from Salmonella agona (strain SL483).